Consider the following 94-residue polypeptide: MVRIRLTRMGKKKQPFYRIVVVDQRKRRDGAYIESLGYYDPIKDPYILNVDVDKAVEWIMKGAQPSDTVRNLLRKAGVFKKVDELKRTKKEENK.

It belongs to the bacterial ribosomal protein bS16 family.

This is Small ribosomal subunit protein bS16 from Thermosipho africanus (strain TCF52B).